A 453-amino-acid polypeptide reads, in one-letter code: Putative F-box/FBD/LRR-repeat protein At1g66290 (453 aa).

A disordered region spans residues 1–28; the sequence is MDEDGERRVRTKRSCSPESSDNGSGDEV. Polar residues predominate over residues 14-23; sequence SCSPESSDNG. An F-box domain is found at 28 to 81; that stretch reads VDWISDLPEALIVLVLLNLPTKDVIKTSVLSTKWRNIWRYVPRLDLDNRHFTEF. LRR repeat units lie at residues 155-179, 210-235, 246-269, 305-329, and 358-381; these read SLKL…VLVL, LDNV…SSKS, APKL…NLSS, LSRV…RCEP, and CSNL…IISE. The FBD domain maps to 373-423; the sequence is RKRTSIISEPRCLLSSLEYVKIEFALDKGKMELVRYLLENSPILKKLTLSL.

In Arabidopsis thaliana (Mouse-ear cress), this protein is Putative F-box/FBD/LRR-repeat protein At1g66290.